The primary structure comprises 365 residues: tRNA N6-adenosine threonylcarbamoyltransferase (365 aa).

Fe cation contacts are provided by H119 and H123. Residues 141–145 (LVSGG), D174, G187, and N288 each bind substrate. Fe cation is bound at residue D316.

It belongs to the KAE1 / TsaD family. Requires Fe(2+) as cofactor.

The protein resides in the cytoplasm. It carries out the reaction L-threonylcarbamoyladenylate + adenosine(37) in tRNA = N(6)-L-threonylcarbamoyladenosine(37) in tRNA + AMP + H(+). In terms of biological role, required for the formation of a threonylcarbamoyl group on adenosine at position 37 (t(6)A37) in tRNAs that read codons beginning with adenine. Is involved in the transfer of the threonylcarbamoyl moiety of threonylcarbamoyl-AMP (TC-AMP) to the N6 group of A37, together with TsaE and TsaB. TsaD likely plays a direct catalytic role in this reaction. This chain is tRNA N6-adenosine threonylcarbamoyltransferase, found in Rhizobium johnstonii (strain DSM 114642 / LMG 32736 / 3841) (Rhizobium leguminosarum bv. viciae).